The sequence spans 168 residues: G/U mismatch-specific DNA glycosylase (168 aa).

It belongs to the uracil-DNA glycosylase (UDG) superfamily. TDG/mug family. As to quaternary structure, binds DNA as a monomer.

It is found in the cytoplasm. It catalyses the reaction Specifically hydrolyzes mismatched double-stranded DNA and polynucleotides, releasing free uracil.. Excises ethenocytosine and uracil, which can arise by alkylation or deamination of cytosine, respectively, from the corresponding mispairs with guanine in ds-DNA. It is capable of hydrolyzing the carbon-nitrogen bond between the sugar-phosphate backbone of the DNA and the mispaired base. The complementary strand guanine functions in substrate recognition. Required for DNA damage lesion repair in stationary-phase cells. The sequence is that of G/U mismatch-specific DNA glycosylase from Klebsiella pneumoniae (strain 342).